The primary structure comprises 570 residues: Interleukin-1 receptor accessory protein (570 aa).

A signal peptide spans 1 to 20 (MGLPWCLMSLFFCGILQSHA). Ig-like C2-type domains follow at residues 21 to 128 (SERC…VAFP), 141 to 230 (PMRL…RTMT), and 243 to 348 (PHIY…AKVK). Residues 21 to 367 (SERCDDWGLD…VELACGFGAT (347 aa)) are Extracellular-facing. 5 disulfide bridges follow: Cys-24–Cys-122, Cys-47–Cys-114, Cys-137–Cys-181, Cys-160–Cys-212, and Cys-266–Cys-332. Residue Asn-57 is glycosylated (N-linked (GlcNAc...) asparagine). The segment at 69-85 (IWYWTRQDRDLEEPINF) is essential for interaction with PTPRD. N-linked (GlcNAc...) asparagine glycans are attached at residues Asn-107, Asn-111, Asn-118, Asn-157, Asn-196, and Asn-209. Residues 368 to 388 (VFLVVVLIVVYHVYWLEMVLF) traverse the membrane as a helical segment. At 389-570 (YRAHFGTDET…GLSYSSLKNV (182 aa)) the chain is on the cytoplasmic side. Positions 403–546 (KEYDIYVSYA…RFWKQLQVAM (144 aa)) constitute a TIR domain. The active site involves Glu-482. Residues 550-570 (KSPRWSSSDKQGLSYSSLKNV) are disordered. Polar residues predominate over residues 553 to 570 (RWSSSDKQGLSYSSLKNV). At Ser-557 the chain carries Phosphoserine.

Belongs to the interleukin-1 receptor family. As to quaternary structure, the interleukin-36 receptor complex is a heterodimer of IL1RL2 and IL1RAP; the association is inhibited by IL36RN. The interleukin-1 receptor complex is a heterodimer of IL1R1 and IL1RAP. Associates with IL1R2 to form a non-signaling interleukin-1 receptor complex. Interacts with IL-33-bound IL1RL1 to form the minimal interleukin-33 signaling complex with a 1:1:1 stoichiometry. Interacts with KIT (independently of stimulation with KITLG/SCF). A mast cell-specific KITLG/SCF-induced interleukin-33 signaling complex contains IL1RL1, IL1RAP, KIT and MYD88. Interacts (via the first immunoglobilin domain) with PTPRD (via the third immunoglobilin domain); induces pre- and postsynaptic differentiation of neurons. As to expression, highly expressed in hypothalamus, in the dentate gyrus of hippocampus, cerebral cortex, cerebellum, liver and lung.

The protein resides in the membrane. The enzyme catalyses NAD(+) + H2O = ADP-D-ribose + nicotinamide + H(+). Functionally, coreceptor for IL1RL2 in the IL-36 signaling system. Coreceptor with IL1R1 in the IL-1 signaling system. Associates with IL1R1 bound to IL1B to form the high affinity interleukin-1 receptor complex which mediates interleukin-1-dependent activation of NF-kappa-B and other pathways. Signaling involves the recruitment of adapter molecules such as TOLLIP, MYD88, and IRAK1 or IRAK2 via the respective TIR domains of the receptor/coreceptor subunits. Recruits TOLLIP to the signaling complex. Does not bind to interleukin-1 alone; binding of IL1RN to IL1R1, prevents its association with IL1R1 to form a signaling complex. The cellular response is modulated through a non-signaling association with the membrane IL1R2 decoy receptor. Coreceptor for IL1RL1 in the IL-33 signaling system. Can bidirectionally induce pre- and postsynaptic differentiation of neurons by trans-synaptically binding to PTPRD. May play a role in IL1B-mediated costimulation of IFNG production from T-helper 1 (Th1) cells. The polypeptide is Interleukin-1 receptor accessory protein (Il1rap) (Rattus norvegicus (Rat)).